The chain runs to 449 residues: Keratin, type I cuticular Ha7 (449 aa).

A head region spans residues 1 to 104; the sequence is MTSFYSTSSC…YGKNTLNGHE (104 aa). One can recognise an IF rod domain in the interval 104–415; it reads EKETMKFLND…NLLESEDCKL (312 aa). The coil 1A stretch occupies residues 105–139; sequence KETMKFLNDRLANYLEKVRQLEQENAELETTLLER. The segment at 140–150 is linker 1; that stretch reads SKCHESTVCPD. The coil 1B stretch occupies residues 151 to 251; it reads YQSYFRTIEE…HEQEVKILRS (101 aa). The interval 252–267 is linker 12; it reads QLGEKFRIELDIEPTI. The coil 2 stretch occupies residues 268–411; sequence DLNRVLGEMR…ATYRNLLESE (144 aa). The tract at residues 416–449 is tail; the sequence is PCNPCSTPASCTSCPSCGPVTGGSPSGHGASMGR.

It belongs to the intermediate filament family.

The chain is Keratin, type I cuticular Ha7 (KRT37) from Homo sapiens (Human).